The primary structure comprises 115 residues: Large ribosomal subunit protein bL20 (115 aa).

It belongs to the bacterial ribosomal protein bL20 family.

In terms of biological role, binds directly to 23S ribosomal RNA and is necessary for the in vitro assembly process of the 50S ribosomal subunit. It is not involved in the protein synthesizing functions of that subunit. The chain is Large ribosomal subunit protein bL20 from Prochlorococcus marinus (strain NATL2A).